The chain runs to 957 residues: MFGALIKKLVGSKNERELKRMWPIVERINQLEPELVKLSDEELRGKTAQFKERYSRGESLDSMLPEAFAVCREAGKRVLGMRHFDVQLIGGMVLHSGKIAEMKTGEGKTLVATLPSYLNGISGRGVHVVTVNDYLAKRDSDWMGRIHKFLGLSVGVIVHGLEDYERREAYAADITYGTNNEFGFDYLRDNMKFDLSEYVQRPFNFAVVDEVDSILIDEARTPLIISGPTEDSTDKYYIIDRIIPLLKKGEVIEVEANTLSGKRKTYTGDFTVDEKAKSASLTEEGVLKVEKLLKIENLYDPRNMEILHHTQQALRAHALFKRDVDYVVRDNEVLIVDEFTGRLMPGRRWSDGLHQAIEAKEGAKIENENQTLATITFQNYFRMYEKLSGMTGTADTEAEEFHKIYKLDVVVIPTNRPLLRPDFPDVIYKTEREKFNAVIGEIKELHEKGQPILVGTISIEKSEELSELLKRQGIPHFVLNAKQHEKEAEIVAQAGRKGMVTIATNMAGRGTDIVLGGNPDGLARQEFNGTPETRTEEFMAAFIETLSKDLPEKELLQSLEREYPGIMPVVAACLKQGGEIDLEELERQVLAEHQKQFNLLVDKNKPVCAAEHDEVVALGGLHILGTERHESRRIDNQLRGRSGRQGDPGSSRFYLSLQDDLLRIFGSERVSMIMDKLGIEEGEAITHGLITRAIENAQKKVEAHNFEIRKHLIEYDDVMNKQREVIYTQRKEILGGNEIRESFTGMMEEAVGDIVAAYVIDRTPAREWDWQGITDTVQKVFGFHLDLTPDLMDRITPVNFDETLRTTARERFQQRLTEFGDDLMDHLIKVIMLQVIDAQWKDHLLSIDHLKEGIGLRGYGQKDPKQEYKREAYKLFMDMMLRIREEVVEKIFWVQVGSEEEMEQFELEQPQQRMVFNLVDEEAAAPAQAPSKSKRSAGRNDPCPCGSGQKYKKCCGK.

Residues glutamine 87, 105–109 (GEGKT), and aspartate 512 contribute to the ATP site. The interval 924–957 (AAPAQAPSKSKRSAGRNDPCPCGSGQKYKKCCGK) is disordered. Zn(2+) contacts are provided by cysteine 943, cysteine 945, cysteine 954, and cysteine 955.

Belongs to the SecA family. As to quaternary structure, monomer and homodimer. Part of the essential Sec protein translocation apparatus which comprises SecA, SecYEG and auxiliary proteins SecDF-YajC and YidC. Zn(2+) is required as a cofactor.

It localises to the cell inner membrane. Its subcellular location is the cytoplasm. The enzyme catalyses ATP + H2O + cellular proteinSide 1 = ADP + phosphate + cellular proteinSide 2.. Functionally, part of the Sec protein translocase complex. Interacts with the SecYEG preprotein conducting channel. Has a central role in coupling the hydrolysis of ATP to the transfer of proteins into and across the cell membrane, serving as an ATP-driven molecular motor driving the stepwise translocation of polypeptide chains across the membrane. The sequence is that of Protein translocase subunit SecA from Geobacter sp. (strain M21).